The chain runs to 261 residues: MNNLFPFLALNKIALQLGPLAIHWYAIFIVGGAALAVWLACKEAPKRNIKTDDIIDFVLFAFPLGIVGARLYYVIFQWSYYSQHPSQIIAMWDGGGAIYGSLIAGAIVLFVFSYYRMIHPLDLLDITIPGVFLAQAMGRWGNFVNQEAYGKIVSNLDWLPAFIRNQMFIDGHYRMPTFLFESIGTLSGFILVMVFRHRIKGLKRGDIFSFYLVWYGAVRFIVEGMRTDSLMLGPARVSQWLSVLLVIVGLVLFIYRRMKKN.

3 helical membrane-spanning segments follow: residues 20–40, 54–74, and 94–114; these read LAIH…VWLA, IIDF…LYYV, and GGGA…VFSY. Arg139 serves as a coordination point for a 1,2-diacyl-sn-glycero-3-phospho-(1'-sn-glycerol). 3 consecutive transmembrane segments (helical) span residues 175–195, 205–225, and 235–255; these read MPTF…VMVF, GDIF…VEGM, and ARVS…LFIY.

This sequence belongs to the Lgt family.

The protein resides in the cell membrane. The enzyme catalyses L-cysteinyl-[prolipoprotein] + a 1,2-diacyl-sn-glycero-3-phospho-(1'-sn-glycerol) = an S-1,2-diacyl-sn-glyceryl-L-cysteinyl-[prolipoprotein] + sn-glycerol 1-phosphate + H(+). The protein operates within protein modification; lipoprotein biosynthesis (diacylglyceryl transfer). In terms of biological role, catalyzes the transfer of the diacylglyceryl group from phosphatidylglycerol to the sulfhydryl group of the N-terminal cysteine of a prolipoprotein, the first step in the formation of mature lipoproteins. This is Phosphatidylglycerol--prolipoprotein diacylglyceryl transferase from Lactococcus lactis subsp. lactis (strain IL1403) (Streptococcus lactis).